Consider the following 122-residue polypeptide: Alkene monooxygenase system, ferredoxin component (122 aa).

A Rieske domain is found at 16-111 (VDVCAVDDLW…LKVEGGRVLI (96 aa)). 4 residues coordinate [2Fe-2S] cluster: Cys55, His57, Cys75, and His78.

The protein belongs to the bacterial ring-hydroxylating dioxygenase ferredoxin component family. In terms of assembly, homodimer. The alkene monooxygenase multicomponent enzyme system is composed of an electron transfer component and a monooxygenase component interacting with the effector protein XamoD. The electron transfer component is composed of a ferredoxin reductase (XamoF) and a ferredoxin (XamoC), and the monooxygenase component is formed by a heterohexamer (dimer of heterotrimers) of two alpha subunits (XamoA), two beta subunits (XamoE) and two gamma subunits (XamoB). The cofactor is [2Fe-2S] cluster.

It localises to the cytoplasm. Its function is as follows. Ferredoxin component of the alkene monooxygenase multicomponent enzyme system which catalyzes the O2- and NADH-dependent epoxidation of short chain (C2 to C6) alkenes to their corresponding epoxides. Functions as an intermediate electron transfer protein. This is Alkene monooxygenase system, ferredoxin component from Xanthobacter autotrophicus (strain ATCC BAA-1158 / Py2).